The primary structure comprises 643 residues: Maternal embryonic leucine zipper kinase (643 aa).

Residues Tyr11–Val263 form the Protein kinase domain. Residues Ile17–Val25 and Lys40 each bind ATP. Position 56 is a phosphothreonine; by autocatalysis (Thr56). Asp132 acts as the Proton acceptor in catalysis. Residue Tyr163 is modified to Phosphotyrosine; by autocatalysis. Phosphothreonine; by autocatalysis is present on Thr167. A phosphoserine; by autocatalysis mark is found at Ser171 and Ser253. A UBA-like region spans residues Leu282–Leu321. The interval Arg326–Met643 is autoinhibitory region. Phosphoserine; by autocatalysis is present on residues Ser336 and Ser343. A Phosphoserine modification is found at Ser352. A phosphoserine; by autocatalysis mark is found at Ser399 and Ser423. Phosphothreonine; by autocatalysis is present on Thr486. Ser490 bears the Phosphoserine mark. Ser497 bears the Phosphoserine; by autocatalysis mark. Phosphothreonine is present on Thr510. Ser521 carries the post-translational modification Phosphoserine; by autocatalysis. Thr531 carries the post-translational modification Phosphothreonine; by autocatalysis. The KA1 domain occupies Ser594 to Met643.

It belongs to the protein kinase superfamily. CAMK Ser/Thr protein kinase family. SNF1 subfamily. As to quaternary structure, monomer. Interacts with ZNF622 and PPP1R8. Autophosphorylated: autophosphorylation of the T-loop at Thr-167 and Ser-171 is required for activation. Expressed in testis, ovary, thymus, spleen and T-cell. Expressed by neural progenitors: highly enriched in cultures containing multipotent progenitors.

The protein localises to the cell membrane. It carries out the reaction L-tyrosyl-[protein] + ATP = O-phospho-L-tyrosyl-[protein] + ADP + H(+). The catalysed reaction is L-seryl-[protein] + ATP = O-phospho-L-seryl-[protein] + ADP + H(+). It catalyses the reaction L-threonyl-[protein] + ATP = O-phospho-L-threonyl-[protein] + ADP + H(+). Activated by autophosphorylation of the T-loop at Thr-167 and Ser-171: in contrast to other members of the SNF1 subfamily, phosphorylation at Thr-167 is not mediated by STK11/LKB1 but via autophosphorylation instead. Inhibited by calcium-binding. Kinase activity is also regulated by reducing agents: dithiothreitol (DTT) or reduced glutathione are required for kinase activity in vitro; such dependence is however not due to the presence of disulfide bonds. In terms of biological role, serine/threonine-protein kinase involved in various processes such as cell cycle regulation, self-renewal of stem cells, apoptosis and splicing regulation. Has a broad substrate specificity; phosphorylates BCL2L14, CDC25B, MAP3K5/ASK1 and ZNF622. Acts as an activator of apoptosis by phosphorylating and activating MAP3K5/ASK1. Acts as a regulator of cell cycle, notably by mediating phosphorylation of CDC25B, promoting localization of CDC25B to the centrosome and the spindle poles during mitosis. Plays a key role in cell proliferation. Required for proliferation of embryonic and postnatal multipotent neural progenitors. Phosphorylates and inhibits BCL2L14. Also involved in the inhibition of spliceosome assembly during mitosis by phosphorylating ZNF622, thereby contributing to its redirection to the nucleus. May also play a role in primitive hematopoiesis. In Mus musculus (Mouse), this protein is Maternal embryonic leucine zipper kinase (Melk).